We begin with the raw amino-acid sequence, 324 residues long: Biotin synthase (324 aa).

The 229-residue stretch at 50–278 (HAGPAFTCAI…QADILVAGGR (229 aa)) folds into the Radical SAM core domain. [4Fe-4S] cluster is bound by residues Cys-67, Cys-71, and Cys-74. The [2Fe-2S] cluster site is built by Cys-143 and Cys-203.

Belongs to the radical SAM superfamily. Biotin synthase family. Homodimer. It depends on [4Fe-4S] cluster as a cofactor. [2Fe-2S] cluster is required as a cofactor.

It carries out the reaction (4R,5S)-dethiobiotin + (sulfur carrier)-SH + 2 reduced [2Fe-2S]-[ferredoxin] + 2 S-adenosyl-L-methionine = (sulfur carrier)-H + biotin + 2 5'-deoxyadenosine + 2 L-methionine + 2 oxidized [2Fe-2S]-[ferredoxin]. The protein operates within cofactor biosynthesis; biotin biosynthesis; biotin from 7,8-diaminononanoate: step 2/2. Its function is as follows. Catalyzes the conversion of dethiobiotin (DTB) to biotin by the insertion of a sulfur atom into dethiobiotin via a radical-based mechanism. The sequence is that of Biotin synthase from Oleidesulfovibrio alaskensis (strain ATCC BAA-1058 / DSM 17464 / G20) (Desulfovibrio alaskensis).